The primary structure comprises 78 residues: Conotoxin TsMSGL-13 (78 aa).

Residues 1-24 (MSGLGIMVLTLLLFMFMATSHQDA) form the signal peptide. The propeptide occupies 25-44 (GEKQATQRDAINVRRRRSIT). Cystine bridges form between Cys-51-Cys-63, Cys-55-Cys-72, and Cys-62-Cys-76. Phe-77 is modified (phenylalanine amide).

This sequence belongs to the conotoxin O3 superfamily. As to expression, expressed by the venom duct.

It is found in the secreted. The protein is Conotoxin TsMSGL-13 of Conus tessulatus (Tessellate cone).